The chain runs to 404 residues: Protein translocase subunit SecF (404 aa).

6 helical membrane passes run 15-35 (KWYFLAFSLVFSVAGLISMGA), 225-245 (LLATLYSLGGMLVYLWFRFEL), 246-266 (IYGIGAVVACFHDTIITVGAF), 275-295 (LTVVAAILTLIGYSMNDTIVV), 327-347 (ILTSGLTFLTVLSLYVFGGEV), and 355-375 (LVIGILIGTYSSIAVAAPMLV).

The protein belongs to the SecD/SecF family. SecF subfamily. In terms of assembly, forms a complex with SecD. Part of the essential Sec protein translocation apparatus which comprises SecA, SecYEG and auxiliary proteins SecDF. Other proteins may also be involved.

It localises to the cell inner membrane. In terms of biological role, part of the Sec protein translocase complex. Interacts with the SecYEG preprotein conducting channel. SecDF uses the proton motive force (PMF) to complete protein translocation after the ATP-dependent function of SecA. The sequence is that of Protein translocase subunit SecF from Koribacter versatilis (strain Ellin345).